Consider the following 542-residue polypeptide: Neutral amino acid transporter B(0) (542 aa).

Methionine 1 is modified (N-acetylmethionine). The Cytoplasmic segment spans residues 1 to 52 (MVADPPRGDSKGLAAAEPTANGGLALASIEDQGEAAGGCCGSRDRVRRCLRA). A helical membrane pass occupies residues 53–82 (NLLVLLTVVAVVVGVALGLGVSGAGGALAL). Topologically, residues 83-95 (GPERLSAFVFPGE) are extracellular. Residues 96 to 117 (LLLRLLRMIILPLVVCSLIGGA) form a helical membrane-spanning segment. The Cytoplasmic segment spans residues 118-131 (ASLDPGALGRLGAW). Residues 132 to 154 (ALLFFLVTTLLASALGVALALAL) traverse the membrane as a helical segment. Residues 155–225 (QPGAASAAIN…GTRVKVPVGQ (71 aa)) lie on the Extracellular side of the membrane. Asparagine 164 and asparagine 213 each carry an N-linked (GlcNAc...) asparagine glycan. The chain crosses the membrane as a helical span at residues 226-249 (EVEGMNILGLVVFAIVFGVALRKL). Topologically, residues 250–258 (GPEGELLIR) are cytoplasmic. Residues 259–286 (FFNSFNEATMVLVSWIMWYAPVGIMFLV) form a helical membrane-spanning segment. Residues 287–307 (AGKIVEMEDVGLLFARLGKYI) are Extracellular-facing. Residues 308-329 (LCCLLGHAIHGLLVLPLIYFLF) form a helical membrane-spanning segment. Residues 330–334 (TRKNP) lie on the Cytoplasmic side of the membrane. An intramembrane region (discontinuously helical) is located at residues 335–365 (YRFLWGIVTPLATAFGTSSSSATLPLMMKCV). Residues 366–374 (EENNGVAKH) lie on the Cytoplasmic side of the membrane. A helical membrane pass occupies residues 375–401 (ISRFILPIGATVNMDGAALFQCVAAVF). Residues glycine 383, threonine 385, and asparagine 387 each coordinate Na(+). Residues 402–414 (IAQLSEQSLDFVK) are Extracellular-facing. The discontinuously helical intramembrane region spans 415–448 (IITILVTATASSVGAAGIPAGGVLTLAIILEAVN). The Extracellular segment spans residues 449-461 (LPVDHISLILAVD). Residues 462 to 483 (WLVDRSCTVLNVEGDALGAGLL) form a helical membrane-spanning segment. Na(+) contacts are provided by asparagine 472 and aspartate 476. The Cytoplasmic segment spans residues 484–542 (QNYVDRTEVRSTEPELIQVKSELPLDPLPAPTEEGNPLLRHYRGPAGDATVASEKESVM). Serine 494 is modified (phosphoserine). Residue threonine 495 is modified to Phosphothreonine. Serine 504, serine 536, and serine 540 each carry phosphoserine. Positions 509-542 (DPLPAPTEEGNPLLRHYRGPAGDATVASEKESVM) are disordered.

This sequence belongs to the dicarboxylate/amino acid:cation symporter (DAACS) (TC 2.A.23) family. SLC1A5 subfamily. Homotrimer.

It is found in the cell membrane. The protein resides in the melanosome. The catalysed reaction is L-glutamine(out) + L-serine(in) + Na(+)(out) = L-glutamine(in) + L-serine(out) + Na(+)(in). It catalyses the reaction L-glutamine(in) + L-serine(out) + Na(+)(out) = L-glutamine(out) + L-serine(in) + Na(+)(in). The enzyme catalyses L-threonine(in) + L-glutamine(out) + Na(+)(out) = L-threonine(out) + L-glutamine(in) + Na(+)(in). It carries out the reaction L-threonine(out) + L-glutamine(in) + Na(+)(out) = L-threonine(in) + L-glutamine(out) + Na(+)(in). The catalysed reaction is L-asparagine(in) + L-glutamine(out) + Na(+)(out) = L-asparagine(out) + L-glutamine(in) + Na(+)(in). It catalyses the reaction L-asparagine(out) + L-glutamine(in) + Na(+)(out) = L-asparagine(in) + L-glutamine(out) + Na(+)(in). The enzyme catalyses L-glutamine(in) + L-alanine(out) + Na(+)(out) = L-glutamine(out) + L-alanine(in) + Na(+)(in). It carries out the reaction L-valine(out) + L-glutamine(in) + Na(+)(out) = L-valine(in) + L-glutamine(out) + Na(+)(in). The catalysed reaction is L-glutamine(in) + L-methionine(out) + Na(+)(out) = L-glutamine(out) + L-methionine(in) + Na(+)(in). It catalyses the reaction L-glutamine(in) + L-glutamate(out) + Na(+)(out) + H(+)(out) = L-glutamine(out) + L-glutamate(in) + Na(+)(in) + H(+)(in). The enzyme catalyses D-serine(in) + L-glutamine(out) + Na(+)(out) = D-serine(out) + L-glutamine(in) + Na(+)(in). It carries out the reaction D-serine(in) + L-alanine(out) + Na(+)(out) = D-serine(out) + L-alanine(in) + Na(+)(in). The catalysed reaction is nitrate(in) = nitrate(out). It catalyses the reaction iodide(out) = iodide(in). The enzyme catalyses thiocyanate(in) = thiocyanate(out). Its function is as follows. Sodium-coupled antiporter of neutral amino acids. In a tri-substrate transport cycle, exchanges neutral amino acids between the extracellular and intracellular compartments, coupled to the inward cotransport of at least one sodium ion. The preferred substrate is the essential amino acid L-glutamine, a precursor for biosynthesis of proteins, nucleotides and amine sugars as well as an alternative fuel for mitochondrial oxidative phosphorylation. Exchanges L-glutamine with other neutral amino acids such as L-serine, L-threonine and L-asparagine in a bidirectional way. Provides L-glutamine to proliferating stem and activated cells driving the metabolic switch toward cell differentiation. The transport cycle is usually pH-independent, with the exception of L-glutamate. Transports extracellular L-glutamate coupled to the cotransport of one proton and one sodium ion in exchange for intracellular L-glutamine counter-ion. May provide for L-glutamate uptake in glial cells regulating glutamine/glutamate cycle in the nervous system. Can transport D-amino acids. Mediates D-serine release from the retinal glia potentially affecting NMDA receptor function in retinal neurons. Displays sodium- and amino acid-dependent but uncoupled channel-like anion conductance with a preference SCN(-) &gt;&gt; NO3(-) &gt; I(-) &gt; Cl(-). Through binding of the fusogenic protein syncytin-1/ERVW-1 may mediate trophoblasts syncytialization, the spontaneous fusion of their plasma membranes, an essential process in placental development. The chain is Neutral amino acid transporter B(0) (SLC1A5) from Macaca fascicularis (Crab-eating macaque).